A 566-amino-acid chain; its full sequence is Bifunctional NADP phosphatase/NAD kinase (566 aa).

The NADP phosphatase stretch occupies residues 1–283; the sequence is MDMLEMALNI…KLVGIFGNRW (283 aa). The Mg(2+) site is built by Glu-66, Asp-85, Val-87, Asp-88, and Asp-229. The NAD kinase stretch occupies residues 275–566; sequence LVGIFGNRWR…YNKLKKLSLM (292 aa). Catalysis depends on Asp-355, which acts as the Proton acceptor. NAD(+)-binding positions include 355-356, Arg-360, 430-431, Lys-441, Arg-458, Asp-460, 471-476, and Asn-528; these read DG, NE, and TAYSLS.

In the N-terminal section; belongs to the inositol monophosphatase superfamily. This sequence in the C-terminal section; belongs to the NAD kinase family. In terms of assembly, homotetramer. Requires Mg(2+) as cofactor.

The protein resides in the cytoplasm. The catalysed reaction is NAD(+) + ATP = ADP + NADP(+) + H(+). The enzyme catalyses NADP(+) + H2O = phosphate + NAD(+). In terms of biological role, involved in the regulation of the intracellular balance between NAD(H) and NADP(H), and is a key enzyme in the biosynthesis of NADP. Catalyzes the phosphorylation and dephosphorylation of NAD and NADP, respectively. Although it shows conflicting dual activities and is able to supply NADP, it seems that its physiological role is to prevent excess accumulation of NADP. This is Bifunctional NADP phosphatase/NAD kinase from Methanococcus maripaludis (strain DSM 14266 / JCM 13030 / NBRC 101832 / S2 / LL).